Consider the following 402-residue polypeptide: Phosphoglycerate kinase (402 aa).

Residues 21–23, R36, 59–62, R114, and R147 each bind substrate; these read DLN and HLGR. ATP contacts are provided by residues K202, E329, and 355–358; that span reads GGDT.

This sequence belongs to the phosphoglycerate kinase family. As to quaternary structure, monomer.

It localises to the cytoplasm. The enzyme catalyses (2R)-3-phosphoglycerate + ATP = (2R)-3-phospho-glyceroyl phosphate + ADP. Its pathway is carbohydrate degradation; glycolysis; pyruvate from D-glyceraldehyde 3-phosphate: step 2/5. The polypeptide is Phosphoglycerate kinase (Psychrobacter sp. (strain PRwf-1)).